A 211-amino-acid polypeptide reads, in one-letter code: ATP phosphoribosyltransferase (211 aa).

The protein belongs to the ATP phosphoribosyltransferase family. Short subfamily. Heteromultimer composed of HisG and HisZ subunits.

Its subcellular location is the cytoplasm. The catalysed reaction is 1-(5-phospho-beta-D-ribosyl)-ATP + diphosphate = 5-phospho-alpha-D-ribose 1-diphosphate + ATP. Its pathway is amino-acid biosynthesis; L-histidine biosynthesis; L-histidine from 5-phospho-alpha-D-ribose 1-diphosphate: step 1/9. Catalyzes the condensation of ATP and 5-phosphoribose 1-diphosphate to form N'-(5'-phosphoribosyl)-ATP (PR-ATP). Has a crucial role in the pathway because the rate of histidine biosynthesis seems to be controlled primarily by regulation of HisG enzymatic activity. In Pseudomonas putida (strain ATCC 47054 / DSM 6125 / CFBP 8728 / NCIMB 11950 / KT2440), this protein is ATP phosphoribosyltransferase.